The following is a 396-amino-acid chain: Corticosteroid-binding globulin (396 aa).

The signal sequence occupies residues 1-22 (MSLALYTCLLWLCTSGLWTAQA). 2 N-linked (GlcNAc...) asparagine glycosylation sites follow: Asn88 and Asn216. Position 246 (Gln246) interacts with cortisol. Residue Asn252 is glycosylated (N-linked (GlcNAc...) asparagine). Residue Asp278 participates in cortisol binding. N-linked (GlcNAc...) asparagine glycans are attached at residues Asn319 and Asn352. Residue Trp384 coordinates cortisol.

Belongs to the serpin family. Expressed by the liver; secreted in plasma.

The protein localises to the secreted. Functionally, major transport protein for glucocorticoids and progestins in the blood of almost all vertebrate species. This is Corticosteroid-binding globulin (Serpina6) from Rattus norvegicus (Rat).